A 128-amino-acid polypeptide reads, in one-letter code: Protein BEX1 (128 aa).

The disordered stretch occupies residues 1–37; it reads MESKEKRAVNNLSMENTNQENEEKEEKEQVANKGEPL. Ser-105 bears the Phosphoserine mark. The tract at residues 107 to 128 is disordered; sequence SLRAVSTDPPHHDHHDEFCLMP. Residues 115 to 128 are compositionally biased toward basic and acidic residues; that stretch reads PPHHDHHDEFCLMP. A his cluster region spans residues 117–121; the sequence is HHDHH. Cys-125 is a binding site for Zn(2+).

This sequence belongs to the BEX family. In terms of assembly, interacts with neurotrophin receptor p75NTR/NGFR. Interacts with OMP. In terms of processing, phosphorylated. Phosphorylation of Ser-105 protects it from the proteasome. Ubiquitinated. Degraded by the proteasome.

It is found in the nucleus. The protein localises to the cytoplasm. Signaling adapter molecule involved in p75NTR/NGFR signaling. Plays a role in cell cycle progression and neuronal differentiation. Inhibits neuronal differentiation in response to nerve growth factor (NGF). May act as a link between the cell cycle and neurotrophic factor signaling, possibly by functioning as an upstream modulator of receptor signaling, coordinating biological responses to external signals with internal cellular states. In absence of reductive stress, acts as a pseudosubstrate for the CRL2(FEM1B) complex: associates with FEM1B via zinc, thereby preventing association between FEM1B and its substrates. The polypeptide is Protein BEX1 (BEX1) (Macaca fascicularis (Crab-eating macaque)).